The sequence spans 354 residues: G-protein coupled estrogen receptor 1 (354 aa).

Residues 1–40 (MEEQTTSLVWIYVNSTEQLNTSYEYNTTYLIEDSDKYQSY) lie on the Extracellular side of the membrane. The helical transmembrane segment at 41 to 61 (VIGLFLSCLYTILLFPIGFIG) threads the bilayer. Over 62–81 (NILILVVNLNHRGKMAIPDL) the chain is Cytoplasmic. A helical membrane pass occupies residues 82 to 102 (YFVNLAVADLILVADSLIEVF). Over 103–112 (NLNEKYYDYA) the chain is Extracellular. The chain crosses the membrane as a helical span at residues 113-133 (VLCTFMSLFLQVNMYSSIFFL). Cysteines 115 and 192 form a disulfide. Over 134–160 (TWMSFDRYIALANSMSSSPLRTMQHAK) the chain is Cytoplasmic. Residues 161-181 (LSCGLIWMASILATLLPFTIV) form a helical membrane-spanning segment. Residues 182–202 (QTQHRGEVHFCFANVFEIQWL) are Extracellular-facing. Residues 203–223 (EVTIGFLVPFSIIGLCYSLIG) traverse the membrane as a helical segment. Residues 224 to 245 (RILMRSQKHRGLWPRRQKALRM) are Cytoplasmic-facing. Residues 246–266 (IVVVVLVFFICWLPENVFISI) form a helical membrane-spanning segment. Residues 267–292 (QLLQGTADPSQRTATTLRHDYPLTGH) lie on the Extracellular side of the membrane. Residues 293–313 (IVNLAAFSNSCLNPIIYSFLG) form a helical membrane-spanning segment. Topologically, residues 314 to 353 (ETFRDKLRLFIKQKASWSVVNRFCHHGLDLHLPVRSEVSE) are cytoplasmic.

The protein belongs to the G-protein coupled receptor 1 family. In terms of assembly, homodimer. Heterodimer. In terms of tissue distribution, expressed in oocytes (at protein level). Highly expressed in brain, heart, testis and ovary. Weakly expressed in muscle and intestine.

It is found in the nucleus. It localises to the cytoplasm. The protein resides in the perinuclear region. Its subcellular location is the cytoskeleton. The protein localises to the cytoplasmic vesicle membrane. It is found in the cell membrane. It localises to the basolateral cell membrane. The protein resides in the endoplasmic reticulum membrane. Its subcellular location is the early endosome. The protein localises to the recycling endosome. It is found in the golgi apparatus. It localises to the trans-Golgi network. The protein resides in the golgi apparatus membrane. Its subcellular location is the cell projection. The protein localises to the dendrite. It is found in the dendritic spine membrane. It localises to the axon. The protein resides in the postsynaptic density. Its subcellular location is the mitochondrion membrane. Its function is as follows. Membrane G-protein coupled estrogen receptor that binds to 17-beta-estradiol (E2) with high affinity, leading to rapid and transient activation of numerous intracellular signaling pathways. Plays a role in the embryonic development of sensory and motor neurons. May induce apoptosis and reduce proliferation of brain cells. Involved in maintenance of meiotic arrest in oocytes. This chain is G-protein coupled estrogen receptor 1 (gper1), found in Micropogonias undulatus (Atlantic croaker).